Consider the following 117-residue polypeptide: Transcription elongation factor A protein-like 8 (117 aa).

Positions 1 to 82 (MQKSCDENEG…EEVIRGVDEL (82 aa)) are disordered. Residues 41–82 (NVREETEGSHRGEPAEPSPEPKEDTPARHLNPEEVIRGVDEL) show a composition bias toward basic and acidic residues. A coiled-coil region spans residues 73 to 100 (EEVIRGVDELERLREEIRRVRNKFVLMH).

Belongs to the TFS-II family. TFA subfamily.

The protein resides in the nucleus. May be involved in transcriptional regulation. In Mus musculus (Mouse), this protein is Transcription elongation factor A protein-like 8 (Tceal8).